The sequence spans 694 residues: Scarecrow-like protein 33 (694 aa).

The segment at Pro289–Lys313 is disordered. Residues Asn309–Val692 form the GRAS domain. A leucine repeat I (LRI) region spans residues Pro316–Gln376. Residues Tyr395–Gly462 form a VHIID region. A VHIID motif is present at residues Ile428–Asp432. The tract at residues Glu478–Asp510 is leucine repeat II (LRII). Residues Val519–Asn613 form a PFYRE region. An SAW region spans residues Ala616 to Val692.

The protein belongs to the GRAS family. In terms of assembly, interacts with SNRNP35.

It is found in the nucleus. In terms of biological role, probable transcription factor involved in plant development. The protein is Scarecrow-like protein 33 (SCL33) of Arabidopsis thaliana (Mouse-ear cress).